Reading from the N-terminus, the 185-residue chain is Probable nicotinate-nucleotide adenylyltransferase (185 aa).

This sequence belongs to the NadD family.

It carries out the reaction nicotinate beta-D-ribonucleotide + ATP + H(+) = deamido-NAD(+) + diphosphate. Its pathway is cofactor biosynthesis; NAD(+) biosynthesis; deamido-NAD(+) from nicotinate D-ribonucleotide: step 1/1. Functionally, catalyzes the reversible adenylation of nicotinate mononucleotide (NaMN) to nicotinic acid adenine dinucleotide (NaAD). This is Probable nicotinate-nucleotide adenylyltransferase from Methylorubrum extorquens (strain PA1) (Methylobacterium extorquens).